The sequence spans 134 residues: Prolactin (134 aa).

A disulfide bridge connects residues Cys-126 and Cys-134.

The protein belongs to the somatotropin/prolactin family.

It is found in the secreted. The protein is Prolactin of Bufo japonicus (Japanese common toad).